Consider the following 375-residue polypeptide: F-box/kelch-repeat protein At4g39240 (375 aa).

The segment covering 1-15 (MPFSAASSSSVSSIA) has biased composition (low complexity). The segment at 1 to 27 (MPFSAASSSSVSSIAEEPPPKKQHDPS) is disordered. The region spanning 31-77 (SSYLLLLPDEIILNCLARLPKCYYPVISLVSKTFRRLIASPEIYVER) is the F-box domain. Kelch repeat units lie at residues 140–186 (EIYV…FFDG), 187–232 (KLYV…RSFA), and 275–321 (KIYT…GNLA).

The sequence is that of F-box/kelch-repeat protein At4g39240 from Arabidopsis thaliana (Mouse-ear cress).